Reading from the N-terminus, the 205-residue chain is Ribonuclease HII (205 aa).

The RNase H type-2 domain maps to 13-205; it reads TIVAGVDEVG…APVKYMLSMC (193 aa). The a divalent metal cation site is built by Asp-19, Glu-20, and Asp-114.

This sequence belongs to the RNase HII family. Mn(2+) serves as cofactor. Mg(2+) is required as a cofactor.

It is found in the cytoplasm. It carries out the reaction Endonucleolytic cleavage to 5'-phosphomonoester.. Functionally, endonuclease that specifically degrades the RNA of RNA-DNA hybrids. In Blochmanniella floridana, this protein is Ribonuclease HII.